A 282-amino-acid chain; its full sequence is uncharacterized protein (282 aa).

6 helical membrane-spanning segments follow: residues 18–38 (PIVLLIPVPGSSVIHDLWAGT), 40–60 (LLVVFGISVLLTFYPGWVTIG), 87–107 (LWIVLAIGFLTAALAGGTPVV), 119–139 (ALHFLRITALSVVLLALGAMV), 164–184 (IPVDEWAVALALALRAFPMLI), and 260–280 (VTLAITAMASGTAVAIESLIL).

Belongs to the CbiQ family.

It is found in the cell membrane. This is an uncharacterized protein from Mycobacterium tuberculosis (strain CDC 1551 / Oshkosh).